The sequence spans 432 residues: MAEAEVKDNEVYEEDLVDYEEEVENGTDGGANAANASADVVKKGYVGIHSSGFRDFLLKPELLRAIQDCGFEHPSEVQHECIPQAILGMDVICQAKSGMGKTAVFVLSSLQQIDPVAGQVGALVLCHTRELAYQICHEFERFSKYLPEVKVAVFYGGVHIKKHKDLLKNDCPHIVVGTPGRILALAREKDLSLKNVRHFILDECDKMLDSLDMRRDVQEIFKMTPHDKQVMMFSATLSKEIRPVCKKFMQDPMEIYVDDEAKLTLHGLVQHYIKLSEAEKNRKLNDLLDALDFNQVVIFVKSVSRAAELNKLLCECNFPAISIHSGMTQEERLTRYKNFKEGHKRILVATDLVGRGIDIERVNIVINYDMPDSADSYLHRVGRAGRFGTKGLAITFVSSASDSDVLNQVQERFEVDIKELPEQIDTSTYMPS.

Residues 1–28 (MAEAEVKDNEVYEEDLVDYEEEVENGTD) adopt a coiled-coil conformation. Positions 51–79 (SGFRDFLLKPELLRAIQDCGFEHPSEVQH) match the Q motif motif. The Helicase ATP-binding domain maps to 82-255 (IPQAILGMDV…KKFMQDPMEI (174 aa)). 95–102 (AKSGMGKT) contributes to the ATP binding site. Residues 202–205 (DECD) carry the DEAD box motif. Residues 283-428 (KLNDLLDALD…ELPEQIDTST (146 aa)) enclose the Helicase C-terminal domain.

It belongs to the DEAD box helicase family. DECD subfamily. Homodimer and heterodimer with AIP2. Interacts with API5.

It localises to the nucleus. It catalyses the reaction ATP + H2O = ADP + phosphate + H(+). In terms of biological role, ATP-binding RNA helicase involved in pre-mRNA splicing. Required for the export of mRNA out of the nucleus. Required for tapetal programmed cell death (PCD) and degeneration during anther development. Forms dimer with AIP2 and binds the promoter region of the cysteine protease CP1. Can complement the yeast RNA helicase SUB2. Plants silencing AIP1 and AIP2 are male sterile. In Oryza sativa subsp. japonica (Rice), this protein is DEAD-box ATP-dependent RNA helicase 56.